Consider the following 116-residue polypeptide: NADH-ubiquinone oxidoreductase chain 3 (116 aa).

Transmembrane regions (helical) follow at residues 3-23 (LVISILAITIILSSILAVVSF), 56-76 (FFLVAILFLLFDLEIALLLAL), and 85-105 (ATGTFFWATAVLILLTLGLIY).

The protein belongs to the complex I subunit 3 family.

Its subcellular location is the mitochondrion membrane. The enzyme catalyses a ubiquinone + NADH + 5 H(+)(in) = a ubiquinol + NAD(+) + 4 H(+)(out). Functionally, core subunit of the mitochondrial membrane respiratory chain NADH dehydrogenase (Complex I) that is believed to belong to the minimal assembly required for catalysis. Complex I functions in the transfer of electrons from NADH to the respiratory chain. The immediate electron acceptor for the enzyme is believed to be ubiquinone. This chain is NADH-ubiquinone oxidoreductase chain 3 (MT-ND3), found in Formosania lacustris (Oriental stream loach).